A 282-amino-acid chain; its full sequence is Keratin-associated protein 10-1 (282 aa).

A run of 24 repeats spans residues 26–30 (CCEPH), 31–35 (CCALS), 36–40 (CCAPA), 57–61 (CCQAA), 79–83 (CCQQS), 89–93 (CCTSS), 99–103 (CCVPV), 104–108 (CCKPV), 109–113 (CCLPT), 121–125 (CCQQS), 131–135 (CCASS), 141–145 (CCVPV), 146–150 (CCKPV), 163–167 (CCQQS), 173–177 (CCTSS), 183–187 (CCVPV), 193–197 (CCKPI), 198–202 (CCVPV), 210–214 (CCQQS), 220–224 (CCTTS), 225–229 (CCRPS), 244–248 (CCMPV), 251–255 (CCAPA), and 262–266 (CCRPA). Positions 26 to 266 (CCEPHCCALS…SCQASCCRPA (241 aa)) are 24 X 5 AA repeats of C-C-X(3).

It belongs to the KRTAP type 10 family. As to quaternary structure, interacts with hair keratins. As to expression, restricted to a narrow region of the hair fiber cuticle, lying approximately 20 cell layers above the apex of the dermal papilla of the hair root; not detected in any other tissues.

Its function is as follows. In the hair cortex, hair keratin intermediate filaments are embedded in an interfilamentous matrix, consisting of hair keratin-associated proteins (KRTAP), which are essential for the formation of a rigid and resistant hair shaft through their extensive disulfide bond cross-linking with abundant cysteine residues of hair keratins. The matrix proteins include the high-sulfur and high-glycine-tyrosine keratins. In Homo sapiens (Human), this protein is Keratin-associated protein 10-1 (KRTAP10-1).